The following is a 273-amino-acid chain: 2,3,4,5-tetrahydropyridine-2,6-dicarboxylate N-succinyltransferase (273 aa).

Substrate contacts are provided by arginine 106 and aspartate 143.

It belongs to the transferase hexapeptide repeat family. Homotrimer.

It is found in the cytoplasm. The enzyme catalyses (S)-2,3,4,5-tetrahydrodipicolinate + succinyl-CoA + H2O = (S)-2-succinylamino-6-oxoheptanedioate + CoA. Its pathway is amino-acid biosynthesis; L-lysine biosynthesis via DAP pathway; LL-2,6-diaminopimelate from (S)-tetrahydrodipicolinate (succinylase route): step 1/3. This is 2,3,4,5-tetrahydropyridine-2,6-dicarboxylate N-succinyltransferase from Wolbachia pipientis wMel.